The following is a 1039-amino-acid chain: MHQKTPEIYSVELSGTKDIVKTDKGDGKEKYRGLKNNCLELKKKNHKEEFQKELHLDDHKLSNRELEEKYGTDIIMGLSSTRAAELLARDGPNSLTPPKQTPEIVKFLKQMVGGFSILLWVGAFLCWIAYGIQYSSDKSASLNNVYLGCVLGLVVILTGIFAYYQEAKSTNIMSSFNKMIPQQALVIRDSEKKTIPSEQLVVGDIVEVKGGDQIPADIRVLSSQGCRVDNSSLTGESEPQPRSSEFTHENPLETKNICFYSTTCLEGTVTGMVINTGDRTIIGHIASLASGVGNEKTPIAIEIEHFVHIVAGVAVSIGILFFIIAVSLKYQVLDSIIFLIGIIVANVPEGLLATVTVTLSLTAKRMAKKNCLVKNLEAVETLGSTSIICSDKTGTLTQNRMTVAHLWFDNQIFVADTSEDHSNQVFDQSSRTWASLSKIITLCNRAEFKPGQENVPIMKKAVIGDASETALLKFSEVILGDVMEIRKRNRKVAEIPFNSTNKFQLSIHEMDDPHGKRFLMVMKGAPERILEKCSTIMINGEEHPLDKSTAKTFHTAYMELGGLGERVLGFCHLYLPADEFPETYSFDIDAMNFPTSNLCFVGLLSMIDPPRSTVPDAVTKCRSAGIKVIMVTGDHPITAKAIAKSVGIISANSETVEDIAHRLNIAVEQVNKRDAKAAVVTGMELKDMSSEQLDEILANYQEIVFARTSPQQKLIIVEGCQRQDAVVAVTGDGVNDSPALKKADIGIAMGIAGSDAAKNAADMVLLDDNFASIVTGVEEGRLIFDNLKKTIAYSLTKNIAELCPFLIYIIVGLPLPIGTITILFIDLGTDIIPSIALAYEKAESDIMNRKPRHKNKDRLVNQPLAVYSYLHIGLMQALGAFLVYFTVYAQEGFLPRTLINLRVEWEKDYVNDLKDSYGQEWTRYQREYLEWTGYTAFFVGILVQQIADLIIRKTRRNSIFQQGLFRNKVIWVGITSQIIIGLILSYGLGSVTALSFTMLRAQYWFVAVPHAILIWVYDEVRKLFIRLYPGSWWDKNMYY.

The Cytoplasmic portion of the chain corresponds to 1-102 (MHQKTPEIYS…NSLTPPKQTP (102 aa)). The helical transmembrane segment at 103-123 (EIVKFLKQMVGGFSILLWVGA) threads the bilayer. The Lumenal segment spans residues 124-146 (FLCWIAYGIQYSSDKSASLNNVY). Residues 147-167 (LGCVLGLVVILTGIFAYYQEA) traverse the membrane as a helical segment. Over 168-303 (KSTNIMSSFN…NEKTPIAIEI (136 aa)) the chain is Cytoplasmic. Residues 304–323 (EHFVHIVAGVAVSIGILFFI) traverse the membrane as a helical segment. Residues 324-335 (IAVSLKYQVLDS) lie on the Lumenal side of the membrane. A helical transmembrane segment spans residues 336–353 (IIFLIGIIVANVPEGLLA). The Cytoplasmic portion of the chain corresponds to 354-787 (TVTVTLSLTA…EEGRLIFDNL (434 aa)). Asp391 acts as the 4-aspartylphosphate intermediate in catalysis. 2 residues coordinate Mg(2+): Asp732 and Asp736. The helical transmembrane segment at 788-807 (KKTIAYSLTKNIAELCPFLI) threads the bilayer. Residues 808–817 (YIIVGLPLPI) are Lumenal-facing. Residues 818 to 838 (GTITILFIDLGTDIIPSIALA) form a helical membrane-spanning segment. Residues 839-858 (YEKAESDIMNRKPRHKNKDR) are Cytoplasmic-facing. Residues 859 to 881 (LVNQPLAVYSYLHIGLMQALGAF) traverse the membrane as a helical segment. Topologically, residues 882–933 (LVYFTVYAQEGFLPRTLINLRVEWEKDYVNDLKDSYGQEWTRYQREYLEWTG) are lumenal. A helical transmembrane segment spans residues 934–953 (YTAFFVGILVQQIADLIIRK). The Cytoplasmic portion of the chain corresponds to 954-967 (TRRNSIFQQGLFRN). Ser958 is subject to Phosphoserine; by PKA. A helical transmembrane segment spans residues 968–986 (KVIWVGITSQIIIGLILSY). Residues 987-1001 (GLGSVTALSFTMLRA) are Lumenal-facing. A helical membrane pass occupies residues 1002–1022 (QYWFVAVPHAILIWVYDEVRK). The Cytoplasmic segment spans residues 1023-1039 (LFIRLYPGSWWDKNMYY).

This sequence belongs to the cation transport ATPase (P-type) (TC 3.A.3) family. Type IIC subfamily. In terms of assembly, the ATPase pump is composed of a catalytic alpha subunit and an auxiliary non-catalytic beta subunit. The alpha subunit pairs with the beta subunit of gastric H(+)/K(+) ATPase ATP4B or the beta subunit of Na(+)/K(+) ATPases ATP1B1 and ATP1B3; this interaction is required for the formation of a functionally active pump and its targeting at the plasma membrane. As to expression, expressed in airway epithelial cells (at protein level). Found in skin and kidney. Detected in prostate basal cells (at protein level). Expression is increased in benign prostate hyperplasia and tumor tissues (at protein level).

The protein resides in the apical cell membrane. The enzyme catalyses K(+)(out) + ATP + H2O + H(+)(in) = K(+)(in) + ADP + phosphate + 2 H(+)(out). It carries out the reaction K(+)(out) + Na(+)(in) + ATP + H2O = K(+)(in) + Na(+)(out) + ADP + phosphate + H(+). With respect to regulation, the ATPase activity is regulated by monovalent cations and pH. Up-regulated by K(+) ions in a dose-dependent way. Down-regulated by Na(+) ions. Inhibited by Na(+)/K(+)-ATPase inhibitor ouabain and H(+)/K(+)-ATPase inhibitor SCH-28080 with an intermediate sensitivity to completely resistant Na(+)/K(+)-ATPases and highly sensitive H(+)/K(+)-ATPases. Functionally, the catalytic subunit of a H(+)/K(+) ATPase and/or Na(+)/K(+) ATPase pump which transports K(+) ions in exchange for Na(+) and/or H(+) ions across the apical membrane of epithelial cells. Uses ATP as an energy source to pump K(+) ions into the cell while transporting Na(+) and/or H(+) ions to the extracellular compartment. Involved in the maintenance of electrolyte homeostasis through K(+) ion absorption in kidney and colon. In the airway epithelium, may play a primary role in mucus acidification regulating its viscosity and clearance. In Homo sapiens (Human), this protein is Potassium-transporting ATPase alpha chain 2.